Here is a 451-residue protein sequence, read N- to C-terminus: F-box/LRR-repeat protein 13 (451 aa).

In terms of domain architecture, F-box spans 17-70 (VDWISKLPDCLLCEVLLNLPTKDVVKTSVLSRRWRNLWKHVPGLDLDNTDFQEF). LRR repeat units lie at residues 128-155 (DDSYGSWEVQLPSSIYTCESLVSLKLCG), 177-202 (TKFADDMGLETLITKCPVLESLTIER), 224-251 (VADSDEGVVEDLVVSIDAPKLEYLRLSD), and 335-363 (CVEFYGYMWEMLPIFLESCPNLKTLVVKS). One can recognise an FBD domain in the interval 370-421 (GENIILPGPRRFLSSLEYVKIERPLKGEAMEMKLVSYLLENSTILKKLTLCL).

The polypeptide is F-box/LRR-repeat protein 13 (FBL13) (Arabidopsis thaliana (Mouse-ear cress)).